A 295-amino-acid chain; its full sequence is Pyridoxal 5'-phosphate synthase subunit PdxS (295 aa).

Asp25 contributes to the D-ribose 5-phosphate binding site. Residue Lys82 is the Schiff-base intermediate with D-ribose 5-phosphate of the active site. Gly154 serves as a coordination point for D-ribose 5-phosphate. Arg166 is a binding site for D-glyceraldehyde 3-phosphate. Residues Gly215 and 236-237 each bind D-ribose 5-phosphate; that span reads GS.

This sequence belongs to the PdxS/SNZ family. In the presence of PdxT, forms a dodecamer of heterodimers.

It catalyses the reaction aldehydo-D-ribose 5-phosphate + D-glyceraldehyde 3-phosphate + L-glutamine = pyridoxal 5'-phosphate + L-glutamate + phosphate + 3 H2O + H(+). It participates in cofactor biosynthesis; pyridoxal 5'-phosphate biosynthesis. Its function is as follows. Catalyzes the formation of pyridoxal 5'-phosphate from ribose 5-phosphate (RBP), glyceraldehyde 3-phosphate (G3P) and ammonia. The ammonia is provided by the PdxT subunit. Can also use ribulose 5-phosphate and dihydroxyacetone phosphate as substrates, resulting from enzyme-catalyzed isomerization of RBP and G3P, respectively. This Dictyoglomus turgidum (strain DSM 6724 / Z-1310) protein is Pyridoxal 5'-phosphate synthase subunit PdxS.